Reading from the N-terminus, the 214-residue chain is Phosphatidyl-N-methylethanolamine N-methyltransferase (214 aa).

The Lumenal segment spans residues 1–19 (MPLVALGVADLFNFVDYSK). The segment at residues 20-40 (TSLAISAAAIAFNPTFWNIVA) is an intramembrane region (helical). The Lumenal segment spans residues 41–52 (RREYRTKFLTRA). Residues 53 to 74 (FGGNAQVACYFLAVTIFGLGLV) form a helical membrane-spanning segment. At 75 to 101 (RDFLYERALRDQPSHPLLEGTYVKYAA) the chain is on the cytoplasmic side. Residues 102–122 (YALLALGNLLVITSTMRLGIT) form a helical membrane-spanning segment. Position 106–108 (106–108 (ALG)) interacts with S-adenosyl-L-methionine. The Lumenal segment spans residues 123–165 (GTFLGDYFGILMDGIVTGFPFNVTSAPMYYGSTMSFLGTALLY). The chain crosses the membrane as a helical span at residues 166-186 (GKPAGLLLTAWVLFVYIIAIQ). Residues 187–214 (FENPFTAEIYAKRDRERAKAAGTSKKEL) are Cytoplasmic-facing. Residue 188-189 (EN) participates in S-adenosyl-L-methionine binding.

This sequence belongs to the class VI-like SAM-binding methyltransferase superfamily. PEMT/PEM2 methyltransferase family.

The protein localises to the endoplasmic reticulum membrane. The protein resides in the mitochondrion membrane. It catalyses the reaction a 1,2-diacyl-sn-glycero-3-phospho-N-methylethanolamine + S-adenosyl-L-methionine = a 1,2-diacyl-sn-glycero-3-phospho-N,N-dimethylethanolamine + S-adenosyl-L-homocysteine + H(+). The enzyme catalyses a 1,2-diacyl-sn-glycero-3-phospho-N,N-dimethylethanolamine + S-adenosyl-L-methionine = a 1,2-diacyl-sn-glycero-3-phosphocholine + S-adenosyl-L-homocysteine + H(+). It participates in phospholipid metabolism; phosphatidylcholine biosynthesis. Its function is as follows. Catalyzes the second two steps of the methylation pathway of phosphatidylcholine biosynthesis, the SAM-dependent methylation of phosphatidylmonomethylethanolamine (PMME) to phosphatidyldimethylethanolamine (PDME) and of PDME to phosphatidylcholine (PC). This Neurospora crassa (strain ATCC 24698 / 74-OR23-1A / CBS 708.71 / DSM 1257 / FGSC 987) protein is Phosphatidyl-N-methylethanolamine N-methyltransferase.